The sequence spans 97 residues: Large ribosomal subunit protein uL23 (97 aa).

Belongs to the universal ribosomal protein uL23 family. Part of the 50S ribosomal subunit. Contacts protein L29, and trigger factor when it is bound to the ribosome.

One of the early assembly proteins it binds 23S rRNA. One of the proteins that surrounds the polypeptide exit tunnel on the outside of the ribosome. Forms the main docking site for trigger factor binding to the ribosome. In Brucella abortus (strain S19), this protein is Large ribosomal subunit protein uL23.